We begin with the raw amino-acid sequence, 59 residues long: Cortexin domain containing 2 (59 aa).

Residues 20–40 (FAIAFVVLVFVFLIVMVFRCV) form a helical membrane-spanning segment.

The protein resides in the membrane. This chain is Cortexin domain containing 2, found in Mus musculus (Mouse).